A 249-amino-acid chain; its full sequence is Aspartate/glutamate leucyltransferase (249 aa).

Belongs to the R-transferase family. Bpt subfamily.

Its subcellular location is the cytoplasm. The catalysed reaction is N-terminal L-glutamyl-[protein] + L-leucyl-tRNA(Leu) = N-terminal L-leucyl-L-glutamyl-[protein] + tRNA(Leu) + H(+). It carries out the reaction N-terminal L-aspartyl-[protein] + L-leucyl-tRNA(Leu) = N-terminal L-leucyl-L-aspartyl-[protein] + tRNA(Leu) + H(+). Its function is as follows. Functions in the N-end rule pathway of protein degradation where it conjugates Leu from its aminoacyl-tRNA to the N-termini of proteins containing an N-terminal aspartate or glutamate. This chain is Aspartate/glutamate leucyltransferase, found in Azorhizobium caulinodans (strain ATCC 43989 / DSM 5975 / JCM 20966 / LMG 6465 / NBRC 14845 / NCIMB 13405 / ORS 571).